The chain runs to 322 residues: Formimidoylglutamase (322 aa).

6 residues coordinate Mn(2+): H127, D163, H165, D167, D254, and D256.

It belongs to the arginase family. The cofactor is Mn(2+).

The catalysed reaction is N-formimidoyl-L-glutamate + H2O = formamide + L-glutamate. It participates in amino-acid degradation; L-histidine degradation into L-glutamate; L-glutamate from N-formimidoyl-L-glutamate (hydrolase route): step 1/1. Functionally, catalyzes the conversion of N-formimidoyl-L-glutamate to L-glutamate and formamide. This chain is Formimidoylglutamase, found in Paraburkholderia xenovorans (strain LB400).